We begin with the raw amino-acid sequence, 138 residues long: Acidic phospholipase A2 1 (138 aa).

The first 16 residues, 1–16, serve as a signal peptide directing secretion; that stretch reads MRTLWIMAVLLVGVEG. Cystine bridges form between C42/C131, C44/C60, C59/C111, C65/C138, C66/C104, C73/C97, and C91/C102. Residues F43, G45, and G47 each contribute to the Ca(2+) site. H63 is an active-site residue. D64 is a Ca(2+) binding site. Residue D105 is part of the active site.

Belongs to the phospholipase A2 family. Group II subfamily. D49 sub-subfamily. Ca(2+) is required as a cofactor. Expressed by the venom gland.

The protein resides in the secreted. The enzyme catalyses a 1,2-diacyl-sn-glycero-3-phosphocholine + H2O = a 1-acyl-sn-glycero-3-phosphocholine + a fatty acid + H(+). Snake venom phospholipase A2 (PLA2) that has high lipolytic activity. PLA2 catalyzes the calcium-dependent hydrolysis of the 2-acyl groups in 3-sn-phosphoglycerides. This chain is Acidic phospholipase A2 1, found in Craspedocephalus gramineus (Bamboo pit viper).